The following is a 484-amino-acid chain: Sodium-dependent glucose transporter 1 (484 aa).

A Phosphoserine modification is found at S6. The next 12 helical transmembrane spans lie at 40 to 60 (WFTT…AAVL), 80 to 100 (EIFV…GVLF), 106 to 126 (FLLL…TPFC), 135 to 155 (MMSI…VLIL), 168 to 188 (ALHF…KLAW), 227 to 247 (LLWA…FLFA), 274 to 294 (ALLC…VTYG), 317 to 337 (SIFW…ATLL), 340 to 360 (GTMM…LVLF), 366 to 386 (CLWI…PSGI), 401 to 421 (AFIL…SGIL), and 428 to 448 (LPVI…LFPV).

Belongs to the major facilitator superfamily. In terms of tissue distribution, expressed in brain, liver, lung, and kidney. In kidney expressed in cortex and inner medulla, in ascending thin limbs (ATLs) and lower descending thin limbs (DTLs). Primarily expressed in the proximal tubules of the kidney.

It localises to the apical cell membrane. Functionally, may function as a sodium-dependent glucose transporter. Potential channels for urea in the inner medulla of kidney. This Rattus norvegicus (Rat) protein is Sodium-dependent glucose transporter 1.